Here is a 1651-residue protein sequence, read N- to C-terminus: A.superbus venom factor 2 (1651 aa).

Positions Met-1–Gly-22 are cleaved as a signal peptide. N-linked (GlcNAc...) asparagine glycosylation occurs at Asn-189. Pro-519, Asp-542, Val-543, and Asp-545 together coordinate Mg(2+). Cystine bridges form between Cys-547–Cys-808, Cys-616–Cys-651, Cys-684–Cys-711, Cys-685–Cys-718, Cys-698–Cys-719, Cys-864–Cys-1501, Cys-1346–Cys-1477, Cys-1377–Cys-1446, Cys-1494–Cys-1499, Cys-1506–Cys-1578, Cys-1525–Cys-1649, and Cys-1625–Cys-1634. Residues Arg-657–Arg-739 constitute a propeptide that is removed on maturation. The C3a-like domain stretch occupies residues Ser-661–Arg-739. The Anaphylatoxin-like domain occupies Cys-684 to Cys-719. Residues Glu-743–Ser-754 are factor B binding site. A propeptide spanning residues His-992–Tyr-1269 is cleaved from the precursor. Residues His-992–Tyr-1269 form a C3d-like domain region. The segment at Val-1197–Thr-1259 is factor H binding site. N-linked (GlcNAc...) asparagine glycosylation is found at Asn-1282 and Asn-1352. The NTR domain occupies Cys-1506–Cys-1649.

It belongs to the venom complement C3 homolog family. As to quaternary structure, heterotrimer of alpha, beta and gamma chains; disulfide-linked. Is active with factor B in the presence of factor D. Post-translationally, first processed by the removal of 4 Arg residues by furin-type protease, forming two chains, alpha and gamma/beta precursor, linked by a disulfide bond. This mature AVF is composed of three chains: alpha, gamma and beta. Expressed by the venom gland.

It is found in the secreted. Functionally, complement-activating protein in snake venom. It is a structural and functional analog of complement component C3b, the activated form of C3. It binds factor B (CFB), which is subsequently cleaved by factor D (CFD) to form the bimolecular complex AVF/Bb. AVF/Bb is a C3 convertase that cleaves complement component C3, but not C5 (as do CVF/Bb). The sequence is that of A.superbus venom factor 2 from Austrelaps superbus (Lowland copperhead snake).